Here is a 493-residue protein sequence, read N- to C-terminus: Galactose-1-phosphate uridylyltransferase (493 aa).

Belongs to the galactose-1-phosphate uridylyltransferase type 2 family.

It localises to the cytoplasm. It catalyses the reaction alpha-D-galactose 1-phosphate + UDP-alpha-D-glucose = alpha-D-glucose 1-phosphate + UDP-alpha-D-galactose. The protein operates within carbohydrate metabolism; galactose metabolism. In Streptococcus salivarius, this protein is Galactose-1-phosphate uridylyltransferase.